The sequence spans 6919 residues: Nonribosomal peptide synthetase easA (6919 aa).

In terms of domain architecture, Carrier 1 spans 17–93 (TNNEVVEKDI…ELCQSVKLAE (77 aa)). Ser-54 carries the O-(pantetheine 4'-phosphoryl)serine modification. Residues 123-427 (EAQKLYASTK…FLRKVKDTRM (305 aa)) are epimerization 1. Residues 294–319 (FRRSTPVESTNDERNTNERQHNRHQN) are disordered. Over residues 304–319 (NDERNTNERQHNRHQN) the composition is skewed to basic and acidic residues. The segment at 604-981 (LNVELDCGRL…ISTTQEINQL (378 aa)) is condensation 1. Positions 1003–1394 (QRLRRPDAWA…GRRDTQIKVR (392 aa)) are adenylation 1. In terms of domain architecture, Carrier 2 spans 1531-1608 (EPETLLERQV…QLAQTAEVKD (78 aa)). Position 1569 is an O-(pantetheine 4'-phosphoryl)serine (Ser-1569). The tract at residues 1617-2031 (LLSPMQKWYF…ANAISALGTE (415 aa)) is epimerization 2. Positions 2072 to 2509 (VEDIYPCSPI…VGQLNTVTPK (438 aa)) are condensation 2. The segment at 2541 to 2930 (RPNATAVCAW…ARKDSQVKVR (390 aa)) is adenylation 2. Positions 3067–3143 (APSTFMEKKL…EMAAHLEAQM (77 aa)) constitute a Carrier 3 domain. At Ser-3104 the chain carries O-(pantetheine 4'-phosphoryl)serine. The tract at residues 3188–3599 (EDVYPCTPLQ…LLSKDEARRL (412 aa)) is condensation 3. The segment at 3620–4018 (QHVSTNPYAP…GRRDGQVKIR (399 aa)) is adenylation 3. The Carrier 4 domain maps to 4151-4228 (TPSTSEEKNI…QLAKKAVIKT (78 aa)). Ser-4188 is modified (O-(pantetheine 4'-phosphoryl)serine). The tract at residues 4282–4708 (ESIYYCSPIQ…EIDVIPTGDV (427 aa)) is condensation 4. The tract at residues 4732 to 5133 (EQALSQPGAQ…GRADGQIKIR (402 aa)) is adenylation 4. The Carrier 5 domain occupies 5260-5337 (ALSTETERRL…DMANTIANSE (78 aa)). O-(pantetheine 4'-phosphoryl)serine is present on Ser-5296. Positions 5380-5775 (EDAYPCTPLQ…VFGQLQSAAN (396 aa)) are condensation 5. The tract at residues 5824–6216 (SCPDAQAVHA…IGRRDTQVKI (393 aa)) is adenylation 5. One can recognise a Carrier 6 domain in the interval 6344–6421 (EPATVTERLL…DMATLIDRKT (78 aa)). Ser-6381 is modified (O-(pantetheine 4'-phosphoryl)serine).

It participates in antibiotic biosynthesis. In terms of biological role, nonribosomal peptide synthetase; part of the gene cluster that mediates the biosynthesis of emericellamides, secondary metabolites acting as antibiotics. The biosynthesis of emericellamides initiates from the highly reducing polyketide synthase easB which catalyzes the formation of the linear polyketide chain. EasB produces several polyketides that can be further processed by the downstream enzymes. The polyketides are released from easB as linear polyketide carboxylic acids, which are converted to CoA thioesters by the acyl-CoA ligase easD. The substrates are then loaded onto the acyltransferase easC, which shuttles them to the first thiolation (T) domain of the nonribosomal peptide synthetase easA. EasA then performs condensation of the polyketides with one glycine, two alanine, one valine and one leucine residues. A last step of cyclization leads to the production of emericellamides. The polypeptide is Nonribosomal peptide synthetase easA (Emericella nidulans (strain FGSC A4 / ATCC 38163 / CBS 112.46 / NRRL 194 / M139) (Aspergillus nidulans)).